The chain runs to 345 residues: Uroporphyrinogen decarboxylase (345 aa).

Residues 26–30 (RQAGR), F45, D75, Y151, S206, and H320 contribute to the substrate site.

The protein belongs to the uroporphyrinogen decarboxylase family. As to quaternary structure, homodimer.

Its subcellular location is the cytoplasm. The catalysed reaction is uroporphyrinogen III + 4 H(+) = coproporphyrinogen III + 4 CO2. It participates in porphyrin-containing compound metabolism; protoporphyrin-IX biosynthesis; coproporphyrinogen-III from 5-aminolevulinate: step 4/4. Catalyzes the decarboxylation of four acetate groups of uroporphyrinogen-III to yield coproporphyrinogen-III. The protein is Uroporphyrinogen decarboxylase of Staphylococcus carnosus (strain TM300).